Reading from the N-terminus, the 438-residue chain is Probable glycine dehydrogenase (decarboxylating) subunit 1 (438 aa).

Belongs to the GcvP family. N-terminal subunit subfamily. The glycine cleavage system is composed of four proteins: P, T, L and H. In this organism, the P 'protein' is a heterodimer of two subunits.

The catalysed reaction is N(6)-[(R)-lipoyl]-L-lysyl-[glycine-cleavage complex H protein] + glycine + H(+) = N(6)-[(R)-S(8)-aminomethyldihydrolipoyl]-L-lysyl-[glycine-cleavage complex H protein] + CO2. Its function is as follows. The glycine cleavage system catalyzes the degradation of glycine. The P protein binds the alpha-amino group of glycine through its pyridoxal phosphate cofactor; CO(2) is released and the remaining methylamine moiety is then transferred to the lipoamide cofactor of the H protein. This is Probable glycine dehydrogenase (decarboxylating) subunit 1 from Syntrophomonas wolfei subsp. wolfei (strain DSM 2245B / Goettingen).